The chain runs to 171 residues: uncharacterized protein (171 aa).

This is an uncharacterized protein from Ureaplasma parvum serovar 3 (strain ATCC 700970).